A 354-amino-acid polypeptide reads, in one-letter code: Holliday junction branch migration complex subunit RuvB (354 aa).

The tract at residues 1–24 (MSIQTDDFAPVPPPKRVVSAAPTS) is disordered. Positions 5 to 195 (TDDFAPVPPP…FGIVARLEFY (191 aa)) are large ATPase domain (RuvB-L). ATP-binding positions include leucine 34, arginine 35, glycine 76, lysine 79, threonine 80, threonine 81, 142-144 (EDY), arginine 185, tyrosine 195, and arginine 232. Threonine 80 provides a ligand contact to Mg(2+). The tract at residues 196–266 (TPEELSRIVT…IAQRALAMLD (71 aa)) is small ATPAse domain (RuvB-S). The segment at 269–354 (PQGFDVMDRK…RQHTDLFGPA (86 aa)) is head domain (RuvB-H). 2 residues coordinate DNA: arginine 324 and arginine 329.

The protein belongs to the RuvB family. In terms of assembly, homohexamer. Forms an RuvA(8)-RuvB(12)-Holliday junction (HJ) complex. HJ DNA is sandwiched between 2 RuvA tetramers; dsDNA enters through RuvA and exits via RuvB. An RuvB hexamer assembles on each DNA strand where it exits the tetramer. Each RuvB hexamer is contacted by two RuvA subunits (via domain III) on 2 adjacent RuvB subunits; this complex drives branch migration. In the full resolvosome a probable DNA-RuvA(4)-RuvB(12)-RuvC(2) complex forms which resolves the HJ.

Its subcellular location is the cytoplasm. The enzyme catalyses ATP + H2O = ADP + phosphate + H(+). Functionally, the RuvA-RuvB-RuvC complex processes Holliday junction (HJ) DNA during genetic recombination and DNA repair, while the RuvA-RuvB complex plays an important role in the rescue of blocked DNA replication forks via replication fork reversal (RFR). RuvA specifically binds to HJ cruciform DNA, conferring on it an open structure. The RuvB hexamer acts as an ATP-dependent pump, pulling dsDNA into and through the RuvAB complex. RuvB forms 2 homohexamers on either side of HJ DNA bound by 1 or 2 RuvA tetramers; 4 subunits per hexamer contact DNA at a time. Coordinated motions by a converter formed by DNA-disengaged RuvB subunits stimulates ATP hydrolysis and nucleotide exchange. Immobilization of the converter enables RuvB to convert the ATP-contained energy into a lever motion, pulling 2 nucleotides of DNA out of the RuvA tetramer per ATP hydrolyzed, thus driving DNA branch migration. The RuvB motors rotate together with the DNA substrate, which together with the progressing nucleotide cycle form the mechanistic basis for DNA recombination by continuous HJ branch migration. Branch migration allows RuvC to scan DNA until it finds its consensus sequence, where it cleaves and resolves cruciform DNA. This is Holliday junction branch migration complex subunit RuvB from Paracidovorax citrulli (strain AAC00-1) (Acidovorax citrulli).